The chain runs to 407 residues: MRQLLPGNTVWRNIRLATMDPQRQAPYGLVDNQALIVREGHICDIVPETQLPVSGDNIHDMQGRLVTPGLIDCHTHLVFAGNRAAEWEQRLNGASYQHISAQGGGINATVSATRACAEETLYLLARERMMRLASEGVTLLEIKSGYGLELATEEKLLRVAAKLAAENAIDISPTLLAAHATPAEYRDDPDGYITLVCETMIPQLWQKGLFDAVDLFCESVGFNVAQSERVLQTAKALGIPVKGHVEQLSLLGGAQLVSRYQGLSADHIEYLDEAGVAAMRDGGTVGVLLPGAFYFLRETQRPPVELLRRYQVPVAVASDFNPGTSPFCSLHLAMNMACVQFGLTPEEAWAGVTRHAARALGRQATHGQLRAGYRADFVVWDAEQPVEIVYEPGRNPLYQRVYRGQIS.

His-74 and His-76 together coordinate Fe(3+). 2 residues coordinate Zn(2+): His-74 and His-76. 4-imidazolone-5-propanoate contacts are provided by Arg-83, Tyr-146, and His-179. Position 146 (Tyr-146) interacts with N-formimidoyl-L-glutamate. His-244 contributes to the Fe(3+) binding site. His-244 is a binding site for Zn(2+). Gln-247 contributes to the 4-imidazolone-5-propanoate binding site. Asp-319 contacts Fe(3+). Asp-319 contributes to the Zn(2+) binding site. N-formimidoyl-L-glutamate-binding residues include Asn-321 and Gly-323. Thr-324 is a binding site for 4-imidazolone-5-propanoate.

This sequence belongs to the metallo-dependent hydrolases superfamily. HutI family. Requires Zn(2+) as cofactor. The cofactor is Fe(3+).

The protein localises to the cytoplasm. The catalysed reaction is 4-imidazolone-5-propanoate + H2O = N-formimidoyl-L-glutamate. It participates in amino-acid degradation; L-histidine degradation into L-glutamate; N-formimidoyl-L-glutamate from L-histidine: step 3/3. Its function is as follows. Catalyzes the hydrolytic cleavage of the carbon-nitrogen bond in imidazolone-5-propanoate to yield N-formimidoyl-L-glutamate. It is the third step in the universal histidine degradation pathway. The chain is Imidazolonepropionase from Salmonella paratyphi C (strain RKS4594).